Reading from the N-terminus, the 411-residue chain is Metal-binding regulatory protein cuf1 (411 aa).

Residues 1-40 (MVVINNVKMACMKCIRGHRSSTCKHNDRELFPIRPKGRPI) constitute a DNA-binding region (copper-fist). Residues C11, C14, C23, and H25 each contribute to the Zn(2+) site. The tract at residues 63-92 (SRKKGSKCSTSSTTDLDSSSASNSSCSIPS) is disordered. A compositionally biased stretch (low complexity) spans 69–92 (KCSTSSTTDLDSSSASNSSCSIPS).

It is found in the cytoplasm. It localises to the nucleus. Functionally, copper-sensing transcription factor that regulates iron uptake genes. Under copper starvation conditions activates the transcription of the copper transport genes, ctr4, ctr5 and ctr6. In Schizosaccharomyces pombe (strain 972 / ATCC 24843) (Fission yeast), this protein is Metal-binding regulatory protein cuf1 (cuf1).